The sequence spans 429 residues: UDP-N-acetylglucosamine 1-carboxyvinyltransferase (429 aa).

A phosphoenolpyruvate-binding site is contributed by Lys-22–Asn-23. A UDP-N-acetyl-alpha-D-glucosamine-binding site is contributed by Arg-102. Cys-126 functions as the Proton donor in the catalytic mechanism. The residue at position 126 (Cys-126) is a 2-(S-cysteinyl)pyruvic acid O-phosphothioketal. UDP-N-acetyl-alpha-D-glucosamine is bound by residues Arg-131–Leu-135, Asp-316, and Ile-338.

Belongs to the EPSP synthase family. MurA subfamily.

The protein localises to the cytoplasm. It carries out the reaction phosphoenolpyruvate + UDP-N-acetyl-alpha-D-glucosamine = UDP-N-acetyl-3-O-(1-carboxyvinyl)-alpha-D-glucosamine + phosphate. Its pathway is cell wall biogenesis; peptidoglycan biosynthesis. Functionally, cell wall formation. Adds enolpyruvyl to UDP-N-acetylglucosamine. This Rhodopseudomonas palustris (strain BisB5) protein is UDP-N-acetylglucosamine 1-carboxyvinyltransferase.